The following is a 242-amino-acid chain: Copper transport protein B (242 aa).

2 consecutive transmembrane segments (helical) span residues 8–28 and 86–106; these read ICLCFVISSPYVYLVSIACVL and ITGPFSLLMSLIVIVLLTAGY. A disordered region spans residues 153–175; that stretch reads ESATTNVPSSQTPNESSPLVAGR. A compositionally biased stretch (polar residues) spans 154–169; that stretch reads SATTNVPSSQTPNESS. Transmembrane regions (helical) follow at residues 187 to 207 and 210 to 230; these read IILAALYAVQVFYSFFIMLLF and YNGFVMLAVAVGAFAGYLVFG.

The protein belongs to the copper transporter (Ctr) (TC 1.A.56) family. SLC31A subfamily.

It localises to the membrane. Its function is as follows. Transporter that is probably involved in the transport of copper, even if it does not act as a major copper transporter. In Aspergillus fumigatus (strain ATCC MYA-4609 / CBS 101355 / FGSC A1100 / Af293) (Neosartorya fumigata), this protein is Copper transport protein B.